The sequence spans 360 residues: Squamosa promoter-binding-like protein 7 (360 aa).

The segment covering 74 to 89 (AQGSGGGGGGGGGGSA) has biased composition (gly residues). A disordered region spans residues 74–98 (AQGSGGGGGGGGGGSADQGKRKEKA). The segment at 105–182 (VPRCQVEGCD…AGHNERRRRS (78 aa)) adopts an SBP-type zinc-finger fold. Zn(2+) is bound by residues Cys-108, Cys-113, Cys-130, His-133, Cys-149, Cys-152, His-156, and Cys-168. Positions 165-181 (KKSCRRRLAGHNERRRR) match the Bipartite nuclear localization signal motif. The span at 172 to 182 (LAGHNERRRRS) shows a compositional bias: basic residues. Disordered stretches follow at residues 172–196 (LAGH…AHPH), 261–306 (FFSD…HEHQ), and 320–360 (AAGG…ARVV).

As to expression, expressed in young panicles.

The protein localises to the nucleus. Its function is as follows. Trans-acting factor that binds specifically to the consensus nucleotide sequence 5'-TNCGTACAA-3'. May be involved in panicle development. This Oryza sativa subsp. indica (Rice) protein is Squamosa promoter-binding-like protein 7 (SPL7).